The primary structure comprises 93 residues: DNA-directed RNA polymerase subunit omega (93 aa).

This sequence belongs to the RNA polymerase subunit omega family. In terms of assembly, the RNAP catalytic core consists of 2 alpha, 1 beta, 1 beta' and 1 omega subunit. When a sigma factor is associated with the core the holoenzyme is formed, which can initiate transcription.

The catalysed reaction is RNA(n) + a ribonucleoside 5'-triphosphate = RNA(n+1) + diphosphate. Promotes RNA polymerase assembly. Latches the N- and C-terminal regions of the beta' subunit thereby facilitating its interaction with the beta and alpha subunits. In Acinetobacter baylyi (strain ATCC 33305 / BD413 / ADP1), this protein is DNA-directed RNA polymerase subunit omega.